We begin with the raw amino-acid sequence, 528 residues long: Capsid scaffolding protein (528 aa).

Residues histidine 46, serine 116, and histidine 135 each act as charge relay system in the active site. The interaction with pAP stretch occupies residues histidine 270 to glutamine 288. Residues lysine 394–alanine 432 are disordered. Positions lysine 416–lysine 422 match the Nuclear localization signal motif. The interaction with major capsid protein stretch occupies residues serine 508–serine 528.

This sequence belongs to the herpesviridae capsid scaffolding protein family. As to quaternary structure, homomultimer. Interacts with major capsid protein. Exists in a monomer-dimer equilibrium with the dimer being the active species. Post-translationally, capsid scaffolding protein is cleaved by assemblin after formation of the spherical procapsid. As a result, the capsid obtains its mature, icosahedral shape. Cleavages occur at two or more sites: release (R-site) and maturation (M-site).

The protein localises to the host cytoplasm. It is found in the host nucleus. It carries out the reaction Cleaves -Ala-|-Ser- and -Ala-|-Ala- bonds in the scaffold protein.. In terms of biological role, acts as a scaffold protein by binding major capsid protein in the cytoplasm, inducing the nuclear localization of both proteins. Multimerizes in the nucleus such as major capsid protein forms the icosahedral T=16 capsid. Autocatalytic cleavage releases the assembly protein, and subsequently abolishes interaction with major capsid protein. Cleavages products are evicted from the capsid before or during DNA packaging. Functionally, protease that plays an essential role in virion assembly within the nucleus. Catalyzes the cleavage of the assembly protein after formation of the spherical procapsid. By that cleavage, the capsid matures and gains its icosahedral shape. The cleavage sites seem to include -Ala-Ser-, -Ala-Ala-, as well as Ala-Thr bonds. Assemblin and cleavages products are evicted from the capsid before or during DNA packaging. Plays a major role in capsid assembly. Acts as a scaffold protein by binding major capsid protein. Multimerizes in the nucleus such as major capsid protein forms the icosahedral T=16 capsid. Cleaved by assemblin after capsid completion. The cleavages products are evicted from the capsid before or during DNA packaging. The polypeptide is Capsid scaffolding protein (U53) (Homo sapiens (Human)).